The following is a 538-amino-acid chain: MTGFTNAGFENDEPVKPKAGFEPDTASLREKVVLNPGEKWRILKNISIISIAFMVQFTAFQGTANLQSSINAKDGLGTVSLSAIYAALVVSCIFLPTLIIRKLTVKWTLVCSMLCYAPYIAFQLFPRFYTLVPAGILVGMGAAPMWASKATYLTQVGQVYAKITEQAVDAIIVRFFGFFFLAWQSAELWGNLISSLVLSSGAHGGGSSSNTTVSEEDLQFCGANFCTTGSGGHGNLERPPEDEIFEISMIYLSCIVAAVCIIAFFLDPLKRYGEKRKGSNSAAELSGLQLLSATFRQMKKPNLQLLIPITVFIGMEQAFIGADFTQAYVACALGVNKIGFVMICFGVVNALCSILFGSVMKYIGRTPIIVLGAVVHFTLITVELFWRPNPDNPIIFYAMSGLWGVGDAVWQTQINGLYGLLFRRNKEAAFSNYRLWESAGFVIAYAYATTLCTQMKLYILLAVLTLGCIGYVIVEILYRKKQRKLKKQEKLEAAEKEKEAAAAAAAAALAAAEAGADGVEETDDELDDLEEDIVVTRL.

N-linked (GlcNAc...) asparagine glycosylation occurs at Asn-45. 5 helical membrane-spanning segments follow: residues 46–66 (ISII…TANL), 80–100 (SLSA…TLII), 105–125 (VKWT…FQLF), 128–148 (FYTL…MWAS), and 170–190 (AIIV…ELWG). N-linked (GlcNAc...) asparagine glycosylation is present at Asn-210. Transmembrane regions (helical) follow at residues 244 to 264 (IFEI…IIAF), 305 to 325 (LLIP…ADFT), 338 to 358 (IGFV…LFGS), 366 to 386 (TPII…ELFW), 394 to 414 (IIFY…QTQI), 435 to 455 (LWES…CTQM), and 457 to 477 (LYIL…VEIL).

This sequence belongs to the unc-93 family.

Its subcellular location is the membrane. In Drosophila melanogaster (Fruit fly), this protein is UNC93-like protein.